Consider the following 570-residue polypeptide: Probable electron transfer flavoprotein-ubiquinone oxidoreductase (570 aa).

An FAD-binding site is contributed by 13–27 (VVIVGAGPAGLSAAI). [4Fe-4S] cluster-binding residues include C515, C539, C542, and C545. The 4Fe-4S ferredoxin-type domain occupies 530-559 (KRFQINAANCVHCKTCDIKDPSQNITWVTP).

It depends on [4Fe-4S] cluster as a cofactor. FAD is required as a cofactor.

It catalyses the reaction a ubiquinone + reduced [electron-transfer flavoprotein] = a ubiquinol + oxidized [electron-transfer flavoprotein] + H(+). In terms of biological role, accepts electrons from ETF and reduces ubiquinone. This is Probable electron transfer flavoprotein-ubiquinone oxidoreductase (etfD) from Acinetobacter baylyi (strain ATCC 33305 / BD413 / ADP1).